Consider the following 169-residue polypeptide: Ubiquitin-fold modifier-conjugating enzyme 1 (169 aa).

Cysteine 116 (glycyl thioester intermediate) is an active-site residue.

The protein belongs to the ubiquitin-conjugating enzyme family. UFC1 subfamily.

In terms of biological role, E2-like enzyme which forms an intermediate with UFM1 via a thioester linkage. This is Ubiquitin-fold modifier-conjugating enzyme 1 from Branchiostoma floridae (Florida lancelet).